Consider the following 226-residue polypeptide: 7-cyano-7-deazaguanine synthase (226 aa).

Position 8–18 (8–18 (ISGGLDSTTCL)) interacts with ATP. Cys-188, Cys-198, Cys-201, and Cys-204 together coordinate Zn(2+).

It belongs to the QueC family. Zn(2+) serves as cofactor.

It carries out the reaction 7-carboxy-7-deazaguanine + NH4(+) + ATP = 7-cyano-7-deazaguanine + ADP + phosphate + H2O + H(+). It participates in purine metabolism; 7-cyano-7-deazaguanine biosynthesis. Functionally, catalyzes the ATP-dependent conversion of 7-carboxy-7-deazaguanine (CDG) to 7-cyano-7-deazaguanine (preQ(0)). In Coxiella burnetii (strain Dugway 5J108-111), this protein is 7-cyano-7-deazaguanine synthase.